Reading from the N-terminus, the 98-residue chain is NADH-ubiquinone oxidoreductase chain 4L (98 aa).

Helical transmembrane passes span 1-21 (MPPI…GMLV), 29-49 (SLLC…TMAL), and 61-81 (IVLL…LVMV).

Belongs to the complex I subunit 4L family. In terms of assembly, core subunit of respiratory chain NADH dehydrogenase (Complex I) which is composed of 45 different subunits.

The protein resides in the mitochondrion inner membrane. The enzyme catalyses a ubiquinone + NADH + 5 H(+)(in) = a ubiquinol + NAD(+) + 4 H(+)(out). Functionally, core subunit of the mitochondrial membrane respiratory chain NADH dehydrogenase (Complex I) which catalyzes electron transfer from NADH through the respiratory chain, using ubiquinone as an electron acceptor. Part of the enzyme membrane arm which is embedded in the lipid bilayer and involved in proton translocation. The chain is NADH-ubiquinone oxidoreductase chain 4L (MT-ND4L) from Orycteropus afer (Aardvark).